A 152-amino-acid chain; its full sequence is 3-dehydroquinate dehydratase (152 aa).

The active-site Proton acceptor is tyrosine 22. Substrate-binding residues include asparagine 73, histidine 79, and aspartate 86. Residue histidine 99 is the Proton donor of the active site. Residues 100 to 101 (LS) and arginine 110 contribute to the substrate site.

This sequence belongs to the type-II 3-dehydroquinase family. In terms of assembly, homododecamer.

The catalysed reaction is 3-dehydroquinate = 3-dehydroshikimate + H2O. The protein operates within metabolic intermediate biosynthesis; chorismate biosynthesis; chorismate from D-erythrose 4-phosphate and phosphoenolpyruvate: step 3/7. Its function is as follows. Catalyzes a trans-dehydration via an enolate intermediate. This chain is 3-dehydroquinate dehydratase, found in Gemmatimonas aurantiaca (strain DSM 14586 / JCM 11422 / NBRC 100505 / T-27).